A 370-amino-acid chain; its full sequence is Immunoglobulin superfamily member 5 (370 aa).

The first 24 residues, 1–24, serve as a signal peptide directing secretion; the sequence is MEGSWRDVLAVLVILAQLTASGSS. 2 consecutive Ig-like V-type domains span residues 25–125 and 128–215; these read YQII…LSVQ and GTLN…KSLT. The Extracellular portion of the chain corresponds to 25-239; it reads YQIIEGPQNV…EEGPALPTWA (215 aa). Asn-33 and Asn-45 each carry an N-linked (GlcNAc...) asparagine glycan. Cysteines 46 and 109 form a disulfide. N-linked (GlcNAc...) asparagine glycosylation is found at Asn-146, Asn-196, and Asn-217. The cysteines at positions 149 and 201 are disulfide-linked. The chain crosses the membrane as a helical span at residues 240–260; that stretch reads IILLAVAFSLLLILIIVLIII. Residues 261 to 370 lie on the Cytoplasmic side of the membrane; the sequence is FCCCCASRRE…PQKVRNVTLV (110 aa). A disordered region spans residues 284-359; the sequence is ANMRTNKADP…THPRVSFDIA (76 aa). Basic and acidic residues predominate over residues 289-301; that stretch reads NKADPETKLKGGK.

Belongs to the immunoglobulin superfamily. In terms of assembly, interacts with MAGI1 at tight junctions, forms a tripartite complex with NPHS1. Interacts with LNX1 isoform 2 via its PDZ 2 domain, it may also interact with other isoforms containing this domain. N-glycosylated. Localized to kidney glomeruli and small intestinal epithelial cells. In kidney glomeruli, it is localized at slit diaphragm. Also found in spermatogonia, gonocytes, hematopoietic stem cells and Sertoli cells.

It is found in the apical cell membrane. Its subcellular location is the cell junction. It localises to the tight junction. Functionally, provides, together with MAGI1, an adhesion machinery at tight junctions, which may regulate the permeability of kidney glomerulus and small intestinal epithelial cells. Mediates calcium-independent homophilic cell adhesion. In testis, it may function as a cell adhesion molecule rather than a tight-junction protein. It may participate in the adhesion between spermatogonia-spermatogonia, spermatogonia-Sertoli cells, and Sertoli cells-Sertoli cells. The protein is Immunoglobulin superfamily member 5 (Igsf5) of Mus musculus (Mouse).